A 471-amino-acid polypeptide reads, in one-letter code: Trimethyllysine dioxygenase (471 aa).

Fe cation-binding residues include His-251 and Asp-253. The disordered stretch occupies residues 272–302; that stretch reads KAAPSRPPPPPPPPPPPSEEKEAAGSAAGEA. Positions 276–288 are enriched in pro residues; sequence SRPPPPPPPPPPP. His-430 serves as a coordination point for Fe cation.

The protein belongs to the gamma-BBH/TMLD family. Requires Fe(2+) as cofactor. It depends on L-ascorbate as a cofactor.

It is found in the cytoplasm. The enzyme catalyses N(6),N(6),N(6)-trimethyl-L-lysine + 2-oxoglutarate + O2 = (3S)-3-hydroxy-N(6),N(6),N(6)-trimethyl-L-lysine + succinate + CO2. The protein operates within amine and polyamine biosynthesis; carnitine biosynthesis. Its function is as follows. Converts trimethyllysine (TML) into hydroxytrimethyllysine (HTML). The sequence is that of Trimethyllysine dioxygenase (cbs-1) from Neurospora crassa (strain ATCC 24698 / 74-OR23-1A / CBS 708.71 / DSM 1257 / FGSC 987).